The primary structure comprises 524 residues: 56 kDa type-specific antigen (524 aa).

The signal sequence occupies residues 1-22 (MKKIMLIASAMSALSLPFSASA). A helical membrane pass occupies residues 67-87 (LTTGLPFGGTLAAGMTIAPGF). Disordered regions lie at residues 112–132 (SKGE…RKRF) and 387–422 (EKLA…KGKE). Composition is skewed to basic and acidic residues over residues 395–405 (EDAKNQGEGDC) and 413–422 (EKSKEGKGKE). Residues 472–492 (TGMVASGALGVAINAAEGVYV) form a helical membrane-spanning segment.

It localises to the cell membrane. Its function is as follows. May be an adherent factor for rickettsial adsorption to the host-cell surface and a determinant of virulence of individual rickettsial strain. It is the major outer membrane protein. In Orientia tsutsugamushi (Rickettsia tsutsugamushi), this protein is 56 kDa type-specific antigen.